The primary structure comprises 103 residues: Phosphoribosyl-ATP pyrophosphatase (103 aa).

Belongs to the PRA-PH family.

It is found in the cytoplasm. It carries out the reaction 1-(5-phospho-beta-D-ribosyl)-ATP + H2O = 1-(5-phospho-beta-D-ribosyl)-5'-AMP + diphosphate + H(+). It functions in the pathway amino-acid biosynthesis; L-histidine biosynthesis; L-histidine from 5-phospho-alpha-D-ribose 1-diphosphate: step 2/9. This is Phosphoribosyl-ATP pyrophosphatase (hisE) from Cereibacter sphaeroides (strain ATCC 17023 / DSM 158 / JCM 6121 / CCUG 31486 / LMG 2827 / NBRC 12203 / NCIMB 8253 / ATH 2.4.1.) (Rhodobacter sphaeroides).